Here is a 116-residue protein sequence, read N- to C-terminus: Nucleoid-associated protein P9215_00191 (116 aa).

The protein belongs to the YbaB/EbfC family. Homodimer.

It is found in the cytoplasm. It localises to the nucleoid. Its function is as follows. Binds to DNA and alters its conformation. May be involved in regulation of gene expression, nucleoid organization and DNA protection. In Prochlorococcus marinus (strain MIT 9215), this protein is Nucleoid-associated protein P9215_00191.